A 238-amino-acid chain; its full sequence is Fatty acid metabolism regulator protein (238 aa).

The region spanning 6–74 (KGPASFAEKY…HGKPTRVNNF (69 aa)) is the HTH gntR-type domain. Residues 34–53 (ERELSELIGVTRTTLREVLQ) constitute a DNA-binding region (H-T-H motif).

Homodimer.

The protein resides in the cytoplasm. Functionally, multifunctional regulator of fatty acid metabolism. The chain is Fatty acid metabolism regulator protein from Shewanella baltica (strain OS185).